Reading from the N-terminus, the 271-residue chain is Acetyl-coenzyme A carboxylase carboxyl transferase subunit beta (271 aa).

The region spanning 21 to 271 (LWIQCPYCKQ…LGDLLALHTA (251 aa)) is the CoA carboxyltransferase N-terminal domain. Positions 25, 28, 43, and 46 each coordinate Zn(2+). The C4-type zinc-finger motif lies at 25–46 (CPYCKQGSYRESLGNAQVCPHC).

This sequence belongs to the AccD/PCCB family. Acetyl-CoA carboxylase is a heterohexamer composed of biotin carboxyl carrier protein (AccB), biotin carboxylase (AccC) and two subunits each of ACCase subunit alpha (AccA) and ACCase subunit beta (AccD). The cofactor is Zn(2+).

It localises to the cytoplasm. It catalyses the reaction N(6)-carboxybiotinyl-L-lysyl-[protein] + acetyl-CoA = N(6)-biotinyl-L-lysyl-[protein] + malonyl-CoA. It participates in lipid metabolism; malonyl-CoA biosynthesis; malonyl-CoA from acetyl-CoA: step 1/1. Its function is as follows. Component of the acetyl coenzyme A carboxylase (ACC) complex. Biotin carboxylase (BC) catalyzes the carboxylation of biotin on its carrier protein (BCCP) and then the CO(2) group is transferred by the transcarboxylase to acetyl-CoA to form malonyl-CoA. The sequence is that of Acetyl-coenzyme A carboxylase carboxyl transferase subunit beta from Lacticaseibacillus casei (strain BL23) (Lactobacillus casei).